Consider the following 643-residue polypeptide: 3D-(3,5/4)-trihydroxycyclohexane-1,2-dione hydrolase (643 aa).

E65 is a thiamine diphosphate binding site. The segment at 441–521 is thiamine pyrophosphate binding; it reads SLPGDLQRMW…VNVLLFDNCG (81 aa). The Mg(2+) site is built by D492 and N519.

The protein belongs to the TPP enzyme family. Requires Mg(2+) as cofactor. It depends on thiamine diphosphate as a cofactor.

It carries out the reaction 3D-3,5/4-trihydroxycyclohexane-1,2-dione + H2O = 5-deoxy-D-glucuronate + H(+). It participates in polyol metabolism; myo-inositol degradation into acetyl-CoA; acetyl-CoA from myo-inositol: step 3/7. Functionally, involved in the cleavage of the C1-C2 bond of 3D-(3,5/4)-trihydroxycyclohexane-1,2-dione (THcHDO) to yield 5-deoxy-glucuronate (5DG). The chain is 3D-(3,5/4)-trihydroxycyclohexane-1,2-dione hydrolase from Clostridium botulinum (strain Eklund 17B / Type B).